The following is a 442-amino-acid chain: 23S rRNA (uracil(1939)-C(5))-methyltransferase RlmD (442 aa).

The TRAM domain occupies alanine 10–lysine 75. Residues cysteine 88, cysteine 94, cysteine 97, and cysteine 173 each coordinate [4Fe-4S] cluster. S-adenosyl-L-methionine contacts are provided by glutamine 276, phenylalanine 305, asparagine 310, glutamate 326, asparagine 353, and aspartate 374. The Nucleophile role is filled by cysteine 400.

It belongs to the class I-like SAM-binding methyltransferase superfamily. RNA M5U methyltransferase family. RlmD subfamily.

The enzyme catalyses uridine(1939) in 23S rRNA + S-adenosyl-L-methionine = 5-methyluridine(1939) in 23S rRNA + S-adenosyl-L-homocysteine + H(+). Its function is as follows. Catalyzes the formation of 5-methyl-uridine at position 1939 (m5U1939) in 23S rRNA. In Haemophilus ducreyi (strain 35000HP / ATCC 700724), this protein is 23S rRNA (uracil(1939)-C(5))-methyltransferase RlmD.